The sequence spans 70 residues: Alpha-elapitoxin-Ast2a (70 aa).

Disulfide bonds link C3–C20, C13–C41, C26–C30, C45–C56, and C57–C62. S70 carries the serine amide modification.

Belongs to the three-finger toxin family. Long-chain subfamily. Type II alpha-neurotoxin sub-subfamily. As to expression, expressed by the venom gland.

The protein localises to the secreted. Its function is as follows. Binds with high affinity to muscular (alpha-1/CHRNA1) and neuronal (alpha-7/CHRNA7) nicotinic acetylcholine receptor (nAChR) and inhibits acetylcholine from binding to the receptor, thereby impairing neuromuscular and neuronal transmission. This is Alpha-elapitoxin-Ast2a from Hydrophis stokesii (Stokes's sea snake).